Reading from the N-terminus, the 464-residue chain is Cysteine--tRNA ligase (464 aa).

Residue Cys29 coordinates Zn(2+). The 'HIGH' region signature appears at 31–41; it reads ATVQGDPHIGH. Cys207, His232, and Glu236 together coordinate Zn(2+). The short motif at 263–267 is the 'KMSKS' region element; sequence KMSKS. Lys266 lines the ATP pocket.

It belongs to the class-I aminoacyl-tRNA synthetase family. Monomer. Zn(2+) serves as cofactor.

Its subcellular location is the cytoplasm. The enzyme catalyses tRNA(Cys) + L-cysteine + ATP = L-cysteinyl-tRNA(Cys) + AMP + diphosphate. The chain is Cysteine--tRNA ligase from Rhodococcus jostii (strain RHA1).